Here is a 364-residue protein sequence, read N- to C-terminus: Coproporphyrin III ferrochelatase (364 aa).

The Fe-coproporphyrin III site is built by Arg-29 and Tyr-118. Fe(2+) contacts are provided by His-169 and Glu-250.

It belongs to the ferrochelatase family.

The protein localises to the cytoplasm. The enzyme catalyses Fe-coproporphyrin III + 2 H(+) = coproporphyrin III + Fe(2+). Its pathway is porphyrin-containing compound metabolism; protoheme biosynthesis. Its function is as follows. Involved in coproporphyrin-dependent heme b biosynthesis. Catalyzes the insertion of ferrous iron into coproporphyrin III to form Fe-coproporphyrin III. The protein is Coproporphyrin III ferrochelatase of Streptococcus pneumoniae serotype 2 (strain D39 / NCTC 7466).